The sequence spans 536 residues: MSSRSHNGSVGRPLGSGPGFLGWEPVDPEAGRPRQPTQGPGLQMMAKGQPAGLSPSGPRGHSQAQEEEEEEEDEDRPGSGKPPTVSHRLGHRRALFEKRKRLSDYALIFGMFGIVVMVTETELSWGVYTKESLCSFALKCLISLSTVILLGLVILYHAREIQLFLVDNGADDWRIAMTWERVSLISLELAVCAIHPVPGHYRFTWTARLAFSLVPSAAEADVDVLLSIPMFLRLYLLARVMLLHSRIFTDASSRSIGALNRVTFNTRFVTKTLMTICPGTVLLVFSISSWIVAAWTVRVCERYHDKQEVTSNFLGAMWLISITFLSIGYGDMVPHTYCGKGVCLLTGIMGAGCTALVVAVVARKLELTKAEKHVHNFMMDTQLTKRVKNAAANVLRETWLIYKHTRLVKKPDQSRVRKHQRKFLQAIHQAQKLRTVKIEQGKVNDQANTLADLAKAQSIAYEVVSELQAQQEELEARLAALESRLDVLGASLQALPSLIAQAICPLPPPWPGPSHLTTAAQSPQSHWLPTTASDCG.

Residues 1 to 90 (MSSRSHNGSV…KPPTVSHRLG (90 aa)) form a disordered region. The segment covering 65-75 (QEEEEEEEDED) has biased composition (acidic residues). Residues 107–127 (LIFGMFGIVVMVTETELSWGV) traverse the membrane as a helical segment. The chain crosses the membrane as a helical span at residues 136–156 (FALKCLISLSTVILLGLVILY). A helical transmembrane segment spans residues 224–244 (VLLSIPMFLRLYLLARVMLLH). The helical transmembrane segment at 273-293 (LMTICPGTVLLVFSISSWIVA) threads the bilayer. The helical transmembrane segment at 313-333 (FLGAMWLISITFLSIGYGDMV) threads the bilayer. An intramembrane region (pore-forming) is located at residues 342-362 (VCLLTGIMGAGCTALVVAVVA). The calmodulin-binding stretch occupies residues 380–459 (DTQLTKRVKN…LADLAKAQSI (80 aa)). The helical transmembrane segment at 487–507 (VLGASLQALPSLIAQAICPLP) threads the bilayer. Residues 514–536 (SHLTTAAQSPQSHWLPTTASDCG) form a disordered region. Positions 515–536 (HLTTAAQSPQSHWLPTTASDCG) are enriched in polar residues.

It belongs to the potassium channel KCNN family. KCa2.1/KCNN1 subfamily. Homodimer. Heteromultimer with KCNN2 and KCNN3. The complex is composed of 4 channel subunits each of which binds to a calmodulin subunit which regulates the channel activity through calcium-binding. Interacts with calmodulin. As to expression, widely expressed including brain.

It localises to the membrane. It is found in the cytoplasm. The protein resides in the myofibril. The protein localises to the sarcomere. Its subcellular location is the z line. The catalysed reaction is K(+)(in) = K(+)(out). Its activity is regulated as follows. Inhibited by bee venom neurotoxin apamin. Inhibited by d-tubocurarine and tetraethylammonium (TEA). Functionally, small conductance calcium-activated potassium channel that mediates the voltage-independent transmembrane transfer of potassium across the cell membrane through a constitutive interaction with calmodulin which binds the intracellular calcium allowing its opening. The current is characterized by a voltage-independent activation, an intracellular calcium concentration increase-dependent activation and a single-channel conductance of about 3 picosiemens. Also presents an inwardly rectifying current, thus reducing its already small outward conductance of potassium ions, which is particularly the case when the membrane potential displays positive values, above + 20 mV. Activation is followed by membrane hyperpolarization. Thought to regulate neuronal excitability by contributing to the slow component of synaptic afterhyperpolarization. The polypeptide is Small conductance calcium-activated potassium channel protein 1 (Rattus norvegicus (Rat)).